The following is an 86-amino-acid chain: Large ribosomal subunit protein bL27 (86 aa).

The segment at 1 to 21 is disordered; the sequence is MAHKKGASSSRNGRDSAAQRL.

It belongs to the bacterial ribosomal protein bL27 family.

The sequence is that of Large ribosomal subunit protein bL27 (rpmA) from Mycobacterium tuberculosis (strain CDC 1551 / Oshkosh).